Here is an 83-residue protein sequence, read N- to C-terminus: MKKGIHPDYQEVCFMDAATGFKFVAGSTLKSSETVEFEGNTYPLIRVEISSDSHPFYTGKQKFAAADGRIERFNKKYGFNKKN.

The protein belongs to the bacterial ribosomal protein bL31 family. Type B subfamily. As to quaternary structure, part of the 50S ribosomal subunit.

Functionally, binds the 23S rRNA. This chain is Large ribosomal subunit protein bL31B, found in Lactobacillus delbrueckii subsp. bulgaricus (strain ATCC 11842 / DSM 20081 / BCRC 10696 / JCM 1002 / NBRC 13953 / NCIMB 11778 / NCTC 12712 / WDCM 00102 / Lb 14).